Here is a 432-residue protein sequence, read N- to C-terminus: Short/branched chain specific acyl-CoA dehydrogenase, mitochondrial (432 aa).

Residues 1–33 (MERATVRLLRGGALLRRNFPSCLSSWKTPPHAL) constitute a mitochondrion transit peptide. N6-acetyllysine; alternate is present on K70. The residue at position 70 (K70) is an N6-succinyllysine; alternate. Residues 174 to 183 (ICISETGAGS) and 207 to 209 (WIS) contribute to the FAD site. S183 lines the substrate pocket. S183 is subject to Phosphoserine. The substrate site is built by Y229 and Y283. K284 carries the N6-acetyllysine; alternate modification. K284 is modified (N6-succinyllysine; alternate). Substrate is bound at residue 291-294 (NEGR). Residues R319, Q330, and 387 to 391 (EWMGG) contribute to the FAD site. The active-site Proton acceptor is E414. 416 to 418 (TSN) is a binding site for FAD. The residue at position 426 (K426) is an N6-acetyllysine.

It belongs to the acyl-CoA dehydrogenase family. Homotetramer. The cofactor is FAD.

The protein localises to the mitochondrion matrix. It carries out the reaction 2-methylbutanoyl-CoA + oxidized [electron-transfer flavoprotein] + H(+) = (2E)-2-methylbut-2-enoyl-CoA + reduced [electron-transfer flavoprotein]. The catalysed reaction is (2S)-2-methylbutanoyl-CoA + oxidized [electron-transfer flavoprotein] + H(+) = (2E)-2-methylbut-2-enoyl-CoA + reduced [electron-transfer flavoprotein]. It catalyses the reaction (2R)-2-methylbutanoyl-CoA + oxidized [electron-transfer flavoprotein] + H(+) = ethylacryloyl-CoA + reduced [electron-transfer flavoprotein]. The enzyme catalyses butanoyl-CoA + oxidized [electron-transfer flavoprotein] + H(+) = (2E)-butenoyl-CoA + reduced [electron-transfer flavoprotein]. It carries out the reaction 2-methylpropanoyl-CoA + oxidized [electron-transfer flavoprotein] + H(+) = 2-methylpropenoyl-CoA + reduced [electron-transfer flavoprotein]. The catalysed reaction is hexanoyl-CoA + oxidized [electron-transfer flavoprotein] + H(+) = (2E)-hexenoyl-CoA + reduced [electron-transfer flavoprotein]. It catalyses the reaction valproyl-CoA + oxidized [electron-transfer flavoprotein] + H(+) = (2E)-2-propylpent-2-enoyl-CoA + reduced [electron-transfer flavoprotein]. It functions in the pathway lipid metabolism; mitochondrial fatty acid beta-oxidation. It participates in amino-acid degradation; L-isoleucine degradation. Short and branched chain specific acyl-CoA dehydrogenase that catalyzes the removal of one hydrogen from C-2 and C-3 of the fatty acyl-CoA thioester, resulting in the formation of trans-2-enoyl-CoA. Among the different mitochondrial acyl-CoA dehydrogenases, acts specifically on short and branched chain acyl-CoA derivatives such as (S)-2-methylbutyryl-CoA as well as short straight chain acyl-CoAs such as butyryl-CoA. Plays an important role in the metabolism of L-isoleucine by catalyzing the dehydrogenation of 2-methylbutyryl-CoA, one of the steps of the L-isoleucine catabolic pathway. Can also act on valproyl-CoA, a metabolite of the valproic acid drug. The polypeptide is Short/branched chain specific acyl-CoA dehydrogenase, mitochondrial (ACADSB) (Bos taurus (Bovine)).